A 110-amino-acid polypeptide reads, in one-letter code: Early E3B 12.7 kDa protein (110 aa).

The first 16 residues, methionine 1–alanine 16, serve as a signal peptide directing secretion. The chain crosses the membrane as a helical span at residues tyrosine 37–leucine 57.

It belongs to the adenoviridae E3_14 family. In terms of processing, phosphorylated on serine; O-glycosylated, but not N-glycosylated.

The protein localises to the host membrane. Functionally, down-regulates the EGF receptor and prevents cytolysis by TNF. This Homo sapiens (Human) protein is Early E3B 12.7 kDa protein.